Consider the following 135-residue polypeptide: HTH-type transcriptional repressor RghR (135 aa).

An HTH cro/C1-type domain is found at 8–63 (LRALREERKLTVNQLATYSGVSAAGISRIENGKRGVPKPATIKKLAEALKIPYEGL). A DNA-binding region (H-T-H motif) is located at residues 19 to 38 (VNQLATYSGVSAAGISRIEN).

Its function is as follows. Represses the expression of yvaM and both rapG and rapH. Binds directly to the promoter regions of yvaM, rapG and rapH. In Bacillus subtilis (strain 168), this protein is HTH-type transcriptional repressor RghR (rghR).